Reading from the N-terminus, the 1153-residue chain is uncharacterized protein (1153 aa).

10 disordered regions span residues 164 to 193 (TTIKQLPPPLPQPQPQPHQQQPHNKKQIDD), 224 to 245 (DNYDDIDNNNNNNNNSNNDDDK), 294 to 316 (KSPQKLKLQQQQQQQQQQKQSKH), 332 to 427 (EHKL…KNKK), 613 to 648 (LSMLDSTNDGSSQEYEEEEEEEKNQKNFEKEEEGEN), 683 to 703 (QQQQQEKEKQQQEKQQDEEMS), 717 to 740 (KSDDNNNNNDNNNNNNNNQTSKRK), 772 to 819 (NKKL…KTIE), 838 to 874 (ASSGGSNNNNNNDQNDSITTKEKERSETIKTHNEDEK), and 942 to 1106 (NNNN…NNEV). Over residues 169-179 (LPPPLPQPQPQ) the composition is skewed to pro residues. Low complexity-rich tracts occupy residues 231–240 (NNNNNNNNSN), 298–312 (KLKLQQQQQQQQQQK), 336–391 (QQQQ…TPKK), and 399–423 (NNVNNNNNNNNNNNNNNNNNNNNNN). The span at 613 to 625 (LSMLDSTNDGSSQ) shows a compositional bias: polar residues. Residues 687 to 699 (QEKEKQQQEKQQD) show a composition bias toward basic and acidic residues. A compositionally biased stretch (low complexity) spans 721 to 734 (NNNNNDNNNNNNNN). Residues 772–784 (NKKLRVDSEDQQT) show a composition bias toward basic and acidic residues. Composition is skewed to low complexity over residues 788 to 808 (TTTTTTTTTTTNTNNNNNNNN) and 839 to 854 (SSGGSNNNNNNDQNDS). Residues 856-874 (TTKEKERSETIKTHNEDEK) are compositionally biased toward basic and acidic residues. Residues 942-987 (NNNNNNNNNINNINNIGNKNTTVNNSNHSNHSNNNINNNNIFKNSN) show a composition bias toward low complexity. Polar residues-rich tracts occupy residues 988–998 (PIVDTNFSSTT) and 1005–1015 (QSKIFTGNQLP). Positions 1019-1059 (INNENVVNNNNNNEINNTTTTTTNNNSGIHKNNNNYNSDNS) are enriched in low complexity. Positions 1064-1081 (DGLKQEKEEQKEEQKENK) are enriched in basic and acidic residues. Positions 1082 to 1105 (NNNNNNNNNNNNNNNNNNNNNNNE) are enriched in low complexity.

This is an uncharacterized protein from Dictyostelium discoideum (Social amoeba).